Reading from the N-terminus, the 996-residue chain is Oxysterol-binding protein homolog 3 (996 aa).

Residues 1–183 (METIDIQNRS…KKKILFNASV (183 aa)) are GOLD domain. Residues 75-114 (GSSSNIEEHHRRSSQHSHSSSNGSDNKRKERSYSSLSISG) are disordered. Residues serine 190 and serine 193 each carry the phosphoserine modification. Residue threonine 210 is modified to Phosphothreonine. Positions 221 to 315 (GRYLQGYLLK…WVDALQTCFD (95 aa)) constitute a PH domain. Threonine 323 bears the Phosphothreonine mark. Residue serine 324 is modified to Phosphoserine. A phosphothreonine mark is found at threonine 325 and threonine 352. Residues 338 to 372 (EVINKSSPQDHDHLTPTATTKSALSHRQHTQKDMD) are disordered. Residues 514 to 520 (EFFDAEE) carry the FFAT motif. A disordered region spans residues 556 to 611 (KEVQLSGSEQIASSSVESYTTNDENHSRKHLKNRHKNRRRGHPHHQKTKSAQSSTE). The span at 558-577 (VQLSGSEQIASSSVESYTTN) shows a compositional bias: polar residues. A compositionally biased stretch (basic residues) spans 582 to 603 (SRKHLKNRHKNRRRGHPHHQKT). A Phosphoserine modification is found at serine 605. Residues 642 to 982 (SLLSFLRKNV…YITGPKSYWE (341 aa)) form an OSBP-related domain (ORD) region. A 1,2-diacyl-sn-glycero-3-phospho-(1D-myo-inositol 4-phosphate) is bound by residues 657 to 660 (SIAM), lysine 717, 745 to 746 (HR), and 945 to 949 (EQLQR).

The protein belongs to the OSBP family. As to quaternary structure, interacts with SCS2.

The protein localises to the cytoplasm. It is found in the endoplasmic reticulum membrane. Lipid transport protein (LTP) involved in non-vesicular transfer of lipids between membranes. Functions in phosphoinositide-coupled directional transport of various lipids by carrying the lipid molecule in a hydrophobic pocket and transferring it between membranes through the cytosol. Involved in maintenance of intracellular sterol distribution and homeostasis. May serve as a sensor of PI4P levels at PM-ER membrane contact site, regulating PI4P phosphatase SAC1 activity. May be involved in ergosterol transport from the plasma membrane (PM) to the ER, however it does not bind sterols directly. Plays a role in the positive regulation of vesicular transport of ceramide from the ER to the Golgi, negatively regulating COPII-mediated ER export of cargos. In Saccharomyces cerevisiae (strain ATCC 204508 / S288c) (Baker's yeast), this protein is Oxysterol-binding protein homolog 3.